Reading from the N-terminus, the 145-residue chain is Large ribosomal subunit protein uL24 (145 aa).

A disordered region spans residues 108–145 (EPIQEEQQKTEETKQEIAPEEVEAKEAQDKQEVKENDQ). Residues 113 to 145 (EQQKTEETKQEIAPEEVEAKEAQDKQEVKENDQ) are compositionally biased toward basic and acidic residues.

The protein belongs to the universal ribosomal protein uL24 family. In terms of assembly, part of the 50S ribosomal subunit.

Its function is as follows. One of two assembly initiator proteins, it binds directly to the 5'-end of the 23S rRNA, where it nucleates assembly of the 50S subunit. Located at the polypeptide exit tunnel on the outside of the subunit. The protein is Large ribosomal subunit protein uL24 (rpl24) of Thermoplasma volcanium (strain ATCC 51530 / DSM 4299 / JCM 9571 / NBRC 15438 / GSS1).